The chain runs to 509 residues: Thymus-specific serine protease (509 aa).

The first 22 residues, 1–22 (MAVKAPWLGFLLLVSLWGLSTP), serve as a signal peptide directing secretion. N-linked (GlcNAc...) asparagine glycans are attached at residues asparagine 69 and asparagine 171. Serine 184 functions as the Charge relay system in the catalytic mechanism. A glycan (N-linked (GlcNAc...) asparagine) is linked at asparagine 320. Residues aspartate 446 and histidine 471 each act as charge relay system in the active site.

It belongs to the peptidase S28 family. In terms of tissue distribution, expressed predominantly in cortical thymic epithelial cells, with highest expression around vessels and the thymic capsule.

The protein localises to the cytoplasmic vesicle. In terms of biological role, protease that may play a role in T-cell development. This Mus musculus (Mouse) protein is Thymus-specific serine protease (Prss16).